The chain runs to 892 residues: Alanine--tRNA ligase (892 aa).

Residues His-596, His-600, Cys-700, and His-704 each contribute to the Zn(2+) site.

The protein belongs to the class-II aminoacyl-tRNA synthetase family. The cofactor is Zn(2+).

The protein localises to the cytoplasm. The enzyme catalyses tRNA(Ala) + L-alanine + ATP = L-alanyl-tRNA(Ala) + AMP + diphosphate. Functionally, catalyzes the attachment of alanine to tRNA(Ala) in a two-step reaction: alanine is first activated by ATP to form Ala-AMP and then transferred to the acceptor end of tRNA(Ala). Also edits incorrectly charged Ser-tRNA(Ala) and Gly-tRNA(Ala) via its editing domain. The chain is Alanine--tRNA ligase from Methanococcus maripaludis (strain C6 / ATCC BAA-1332).